The chain runs to 333 residues: NADH-ubiquinone oxidoreductase chain 2 (333 aa).

10 helical membrane-spanning segments follow: residues 10 to 30, 57 to 77, 91 to 111, 121 to 141, 143 to 163, 170 to 190, 192 to 212, 242 to 262, 267 to 287, and 313 to 333; these read WFIY…NIFI, LIYY…IIVY, FMVQ…FWMI, QIFL…VSMT, INSW…FYAN, KLLA…LELN, NMFI…ISFL, MYPI…MVSV, WILF…IIIL, and SYFA…LNFL.

Belongs to the complex I subunit 2 family.

Its subcellular location is the mitochondrion inner membrane. The catalysed reaction is a ubiquinone + NADH + 5 H(+)(in) = a ubiquinol + NAD(+) + 4 H(+)(out). Its function is as follows. Core subunit of the mitochondrial membrane respiratory chain NADH dehydrogenase (Complex I) that is believed to belong to the minimal assembly required for catalysis. Complex I functions in the transfer of electrons from NADH to the respiratory chain. The immediate electron acceptor for the enzyme is believed to be ubiquinone. This chain is NADH-ubiquinone oxidoreductase chain 2 (ND2), found in Apis mellifera ligustica (Common honeybee).